The sequence spans 349 residues: Anthranilate phosphoribosyltransferase (349 aa).

5-phospho-alpha-D-ribose 1-diphosphate contacts are provided by residues G86, 89–90, T94, 96–99, 114–122, and S126; these read GD, NIST, and KHGNKSASG. G86 provides a ligand contact to anthranilate. S98 is a binding site for Mg(2+). N117 is a binding site for anthranilate. An anthranilate-binding site is contributed by R172. 2 residues coordinate Mg(2+): D231 and E232.

This sequence belongs to the anthranilate phosphoribosyltransferase family. In terms of assembly, homodimer. Requires Mg(2+) as cofactor.

It catalyses the reaction N-(5-phospho-beta-D-ribosyl)anthranilate + diphosphate = 5-phospho-alpha-D-ribose 1-diphosphate + anthranilate. It participates in amino-acid biosynthesis; L-tryptophan biosynthesis; L-tryptophan from chorismate: step 2/5. Functionally, catalyzes the transfer of the phosphoribosyl group of 5-phosphorylribose-1-pyrophosphate (PRPP) to anthranilate to yield N-(5'-phosphoribosyl)-anthranilate (PRA). The sequence is that of Anthranilate phosphoribosyltransferase from Prochlorococcus marinus (strain MIT 9312).